A 428-amino-acid chain; its full sequence is Glutamate-1-semialdehyde 2,1-aminomutase 1 (428 aa).

Residue Lys-268 is modified to N6-(pyridoxal phosphate)lysine.

Belongs to the class-III pyridoxal-phosphate-dependent aminotransferase family. HemL subfamily. As to quaternary structure, homodimer. The cofactor is pyridoxal 5'-phosphate.

It localises to the cytoplasm. It catalyses the reaction (S)-4-amino-5-oxopentanoate = 5-aminolevulinate. It functions in the pathway porphyrin-containing compound metabolism; protoporphyrin-IX biosynthesis; 5-aminolevulinate from L-glutamyl-tRNA(Glu): step 2/2. In Bacillus cereus (strain G9842), this protein is Glutamate-1-semialdehyde 2,1-aminomutase 1.